The primary structure comprises 456 residues: ATP synthase subunit beta 1 (456 aa).

152-159 lines the ATP pocket; sequence GGAGVGKS.

Belongs to the ATPase alpha/beta chains family. In terms of assembly, F-type ATPases have 2 components, CF(1) - the catalytic core - and CF(0) - the membrane proton channel. CF(1) has five subunits: alpha(3), beta(3), gamma(1), delta(1), epsilon(1). CF(0) has three main subunits: a(1), b(2) and c(9-12). The alpha and beta chains form an alternating ring which encloses part of the gamma chain. CF(1) is attached to CF(0) by a central stalk formed by the gamma and epsilon chains, while a peripheral stalk is formed by the delta and b chains.

The protein resides in the cell membrane. The catalysed reaction is ATP + H2O + 4 H(+)(in) = ADP + phosphate + 5 H(+)(out). Functionally, produces ATP from ADP in the presence of a proton gradient across the membrane. The catalytic sites are hosted primarily by the beta subunits. This chain is ATP synthase subunit beta 1, found in Listeria welshimeri serovar 6b (strain ATCC 35897 / DSM 20650 / CCUG 15529 / CIP 8149 / NCTC 11857 / SLCC 5334 / V8).